Here is a 430-residue protein sequence, read N- to C-terminus: Proteasome-activating nucleotidase (430 aa).

A coiled-coil region spans residues 9 to 89 (TELKKEKKAF…LRRELDRMRV (81 aa)). ATP-binding positions include 214–219 (GTGKTL) and His353. Residues 428–430 (LYR) form a docks into pockets in the proteasome alpha-ring to cause gate opening region.

Belongs to the AAA ATPase family. In terms of assembly, homohexamer. The hexameric complex has a two-ring architecture resembling a top hat that caps the 20S proteasome core at one or both ends. Alone, can form a complex composed of two stacked hexameric rings in vitro. Upon ATP-binding, the C-terminus of PAN interacts with the alpha-rings of the proteasome core by binding to the intersubunit pockets.

It localises to the cytoplasm. With respect to regulation, ATPase activity is inhibited by EDTA, N-ethylmaleimide (NEM) and p-chloromercuriphenyl-sulfonic acid (PCMS) in vitro. Functionally, ATPase which is responsible for recognizing, binding, unfolding and translocation of substrate proteins into the archaeal 20S proteasome core particle. Is essential for opening the gate of the 20S proteasome via an interaction with its C-terminus, thereby allowing substrate entry and access to the site of proteolysis. Thus, the C-termini of the proteasomal ATPase function like a 'key in a lock' to induce gate opening and therefore regulate proteolysis. Unfolding activity requires energy from ATP hydrolysis, whereas ATP binding alone promotes ATPase-20S proteasome association which triggers gate opening, and supports translocation of unfolded substrates. In addition to ATP, is able to cleave other nucleotide triphosphates such as CTP, GTP and UTP, but hydrolysis of these other nucleotides is less effective in promoting proteolysis than ATP. Moreover, PAN by itself can function as a chaperone in vitro. The protein is Proteasome-activating nucleotidase of Methanocaldococcus jannaschii (strain ATCC 43067 / DSM 2661 / JAL-1 / JCM 10045 / NBRC 100440) (Methanococcus jannaschii).